The primary structure comprises 269 residues: MIKTNKKTPKNIILSLENVSISYGTFEAVRNVFCNFKKGNITSLIGPSGCGKSTVLRSLNRMNDLIPNCSLKGTVLFDGTNIYDKRVDPVEVRRRIGMVFQQPNPFPKSIYENIAFGARINGFTGDMDELVESSLRKAALWDECKDKLNDSGYSLSGGQQQRLCIARTIAIEPEIILMDEPCSALDPISTLKIEETMHELKMNYTIIIVTHNMQQALRVSDMTAFFNAVEYEDGDGGKVGYLAEFNSTKKIFNSPKEKTTQEYISGKFG.

One can recognise an ABC transporter domain in the interval 14-253 (LSLENVSISY…EFNSTKKIFN (240 aa)). Position 46–53 (46–53 (GPSGCGKS)) interacts with ATP.

The protein belongs to the ABC transporter superfamily. Phosphate importer (TC 3.A.1.7) family. As to quaternary structure, the complex is composed of two ATP-binding proteins (PstB), two transmembrane proteins (PstC and PstA) and a solute-binding protein (PstS).

Its subcellular location is the cell inner membrane. The catalysed reaction is phosphate(out) + ATP + H2O = ADP + 2 phosphate(in) + H(+). In terms of biological role, part of the ABC transporter complex PstSACB involved in phosphate import. Responsible for energy coupling to the transport system. The polypeptide is Phosphate import ATP-binding protein PstB (Prochlorococcus marinus (strain MIT 9312)).